Consider the following 321-residue polypeptide: MSFRALSVFSLFLSYLILGSAEQCGRQAGGALCPGGLCCSQFGWCGNTDDYCKKENGCQSQCSGSGGDTGGLDSLITRERFDQMLLHRNDGGCPARGFYTYDAFIAAAKSFPAFATTGDDATRKREVAAFLAQTSHETTGGAGWAAPDGPYTWGYCYNRELNPADYCQWDPNYPCAPGKQYFGRGPMQLTWNYNYGQCGRAIGVDLLNNPDLLATDPTISFKSAFWFWMTPQSPKPSCHDVIIGAWSPSGSDQAAGRVPGFGLITNIINGGLECGQGWNAKVEDRIGFYKRYCDTLGVGYGNNLDCYNQRSYNNGPSVDSM.

The N-terminal stretch at 1–21 (MSFRALSVFSLFLSYLILGSA) is a signal peptide. The 43-residue stretch at 22–64 (EQCGRQAGGALCPGGLCCSQFGWCGNTDDYCKKENGCQSQCSG) folds into the Chitin-binding type-1 domain. Cystine bridges form between cysteine 24–cysteine 39, cysteine 33–cysteine 45, cysteine 38–cysteine 52, cysteine 58–cysteine 62, cysteine 93–cysteine 156, cysteine 167–cysteine 175, and cysteine 274–cysteine 306. Residues 65–98 (SGGDTGGLDSLITRERFDQMLLHRNDGGCPARGF) form a hinge region. Residues 99-321 (YTYDAFIAAA…YNNGPSVDSM (223 aa)) are catalytic. Glutamate 137 functions as the Proton donor in the catalytic mechanism.

This sequence belongs to the glycosyl hydrolase 19 family. Chitinase class I subfamily.

The protein localises to the vacuole. The enzyme catalyses Random endo-hydrolysis of N-acetyl-beta-D-glucosaminide (1-&gt;4)-beta-linkages in chitin and chitodextrins.. Functionally, defense against chitin-containing fungal pathogens. In Theobroma cacao (Cacao), this protein is Endochitinase 1 (CHIA1).